The primary structure comprises 351 residues: Formyl peptide receptor 2 (351 aa).

Topologically, residues 1-29 are extracellular; sequence MESNYSIHLNGSEVVVYDSTISRVLWILS. Residues Asn4 and Asn10 are each glycosylated (N-linked (GlcNAc...) asparagine). The helical transmembrane segment at 30–50 threads the bilayer; that stretch reads MVVVSITFFLGVLGNGLVIWV. Residues 51-61 lie on the Cytoplasmic side of the membrane; sequence AGFRMPHTVTT. Residues 62 to 82 traverse the membrane as a helical segment; that stretch reads IWYLNLALADFSFTATLPFLL. The Extracellular segment spans residues 83–99; sequence VEMAMKEKWPFGWFLCK. A disulfide bridge connects residues Cys98 and Cys176. A helical membrane pass occupies residues 100 to 120; the sequence is LVHIVVDVNLFGSVFLIALIA. Residues 121–144 lie on the Cytoplasmic side of the membrane; sequence LDRCICVLHPVWAQNHRTVSLARK. Residues 145–165 traverse the membrane as a helical segment; sequence VVVGPWIFALILTLPIFIFLT. Residues 166–205 are Extracellular-facing; that stretch reads TVRIPGGDVYCTFNFGSWAQTDEEKLNTAITFVTTRGIIR. A helical transmembrane segment spans residues 206-226; it reads FLIGFSMPMSIVAVCYGLIAV. At 227-241 the chain is on the cytoplasmic side; the sequence is KINRRNLVNSSRPLR. A helical transmembrane segment spans residues 242 to 262; that stretch reads VLTAVVASFFICWFPFQLVAL. At 263–282 the chain is on the extracellular side; sequence LGTVWFKETLLSGSYKILDM. The helical transmembrane segment at 283 to 305 threads the bilayer; sequence FVNPTSSLAYFNSCLNPMLYVFM. The Cytoplasmic portion of the chain corresponds to 306-351; sequence GQDFRERFIHSLPYSLERALSEDSGQTSDSSTSSTSPPADIELKAP. Residues 325–351 form a disordered region; that stretch reads LSEDSGQTSDSSTSSTSPPADIELKAP. The span at 327 to 341 shows a compositional bias: low complexity; sequence EDSGQTSDSSTSSTS.

It belongs to the G-protein coupled receptor 1 family. Interacts with Amyloid-beta protein 42, product of APP; the interaction takes place at the cell surface and the complex is then rapidly internalized. Primarily expressed in neutrophils. Not detected in vomeronasal neurons.

It localises to the cell membrane. Functionally, high affinity receptor for N-formyl-methionyl peptides (FMLP), which are powerful neutrophil chemotactic factors. Stimulates chemotaxis in immune cells to site of infection or tissue damage upon recognition of several ligands, such as FMLP, or ligand involved in cell damage, disease or inflammation. Receptor for the chemokine-like protein FAM19A5, mediating FAM19A5-stimulated macrophage chemotaxis and the inhibitory effect on TNFSF11/RANKL-induced osteoclast differentiation. This chain is Formyl peptide receptor 2 (Fpr2), found in Mus musculus (Mouse).